A 1115-amino-acid chain; its full sequence is PAN2-PAN3 deadenylation complex catalytic subunit PAN2 (1115 aa).

WD repeat units follow at residues 27–66 (NRDKEITAISFDEKANLIWSGDSYGCISSYDPTFQLYTRY), 112–153 (AAFS…GCLD), 155–194 (LLNYSSKVKLMCSNNKVLSIGRQTGTVDLLDPTSNRTIKS), 197–236 (AHSASISAMDLRDNTLVTVGKSKRFYNLYADPFVNVYDLR), and 295–334 (HPCQSIKKLCLSPNGDVLGILEADNHLDTWRRSSNNMGMF). Residues 337-473 (TPEMLAYPDY…IQTYTSINKY (137 aa)) form a linker region. A USP domain is found at 474–855 (EVPPAYSRLP…TPEIIIYCDA (382 aa)). Zn(2+)-binding residues include C660, H662, C713, and C716. Positions 907 to 1079 (VAIDAEFVSL…EDAHTALILY (173 aa)) constitute an Exonuclease domain. A divalent metal cation is bound by residues D910, E912, D1020, and D1071.

Belongs to the peptidase C19 family. PAN2 subfamily. In terms of assembly, forms a heterotrimer with an asymmetric homodimer of the regulatory subunit PAN3 to form the poly(A)-nuclease (PAN) deadenylation complex. Requires a divalent metal cation as cofactor.

The protein localises to the cytoplasm. It catalyses the reaction Exonucleolytic cleavage of poly(A) to 5'-AMP.. Positively regulated by the regulatory subunit PAN3. Negatively regulated by PAB1-binding protein PBP1. Inhibited under stress conditions. Inhibition of deadenylation under stress increases mRNA stability, which may be a mechanism to retain the majority of the cytoplasmic pool of mRNAs for later reuse and recovery from stress. Catalytic subunit of the poly(A)-nuclease (PAN) deadenylation complex, one of two cytoplasmic mRNA deadenylases involved in mRNA turnover. PAN specifically shortens poly(A) tails of RNA and the activity is stimulated by poly(A)-binding protein PAB1. PAN deadenylation is followed by rapid degradation of the shortened mRNA tails by the CCR4-NOT complex. Deadenylated mRNAs are then degraded by two alternative mechanisms, namely exosome-mediated 3'-5' exonucleolytic degradation, or deadenylation-dependent mRNA decaping by DCP1-DCP2 and subsequent 5'-3' exonucleolytic degradation by XRN1. May also be involved in post-transcriptional maturation of mRNA poly(A) tails, trimming the tails from their synthesized length to the slightly shorter, apparently messenger-specific length found on newly exported mRNAs. PAN cooperates with protein kinase DUN1 in the regulation of RAD5 mRNA levels and cell survival in response to replicational stress. In Saccharomyces cerevisiae (strain ATCC 204508 / S288c) (Baker's yeast), this protein is PAN2-PAN3 deadenylation complex catalytic subunit PAN2.